Reading from the N-terminus, the 567-residue chain is Oxygen-dependent choline dehydrogenase (567 aa).

An FAD-binding site is contributed by 4 to 33; that stretch reads DYIIIGAGSAGNVLAARLTEDADVTVLLLE. Catalysis depends on H473, which acts as the Proton acceptor.

It belongs to the GMC oxidoreductase family. FAD is required as a cofactor.

It catalyses the reaction choline + A = betaine aldehyde + AH2. The enzyme catalyses betaine aldehyde + NAD(+) + H2O = glycine betaine + NADH + 2 H(+). It participates in amine and polyamine biosynthesis; betaine biosynthesis via choline pathway; betaine aldehyde from choline (cytochrome c reductase route): step 1/1. Its function is as follows. Involved in the biosynthesis of the osmoprotectant glycine betaine. Catalyzes the oxidation of choline to betaine aldehyde and betaine aldehyde to glycine betaine at the same rate. This Yersinia pseudotuberculosis serotype O:1b (strain IP 31758) protein is Oxygen-dependent choline dehydrogenase.